The chain runs to 61 residues: Small ribosomal subunit protein uS14 (61 aa).

Zn(2+)-binding residues include Cys-24, Cys-27, Cys-40, and Cys-43.

This sequence belongs to the universal ribosomal protein uS14 family. Zinc-binding uS14 subfamily. Part of the 30S ribosomal subunit. Contacts proteins S3 and S10. The cofactor is Zn(2+).

Binds 16S rRNA, required for the assembly of 30S particles and may also be responsible for determining the conformation of the 16S rRNA at the A site. This is Small ribosomal subunit protein uS14 from Finegoldia magna (strain ATCC 29328 / DSM 20472 / WAL 2508) (Peptostreptococcus magnus).